Here is a 151-residue protein sequence, read N- to C-terminus: uncharacterized protein (151 aa).

The disordered stretch occupies residues 130 to 151 (REIPRTEPDPETTPDNSYRNYL).

This is an uncharacterized protein from Enterobacteria phage P4 (Bacteriophage P4).